A 348-amino-acid polypeptide reads, in one-letter code: Dihydroorotase (348 aa).

His14 and His16 together coordinate Zn(2+). Residues 16 to 18 and Asn42 contribute to the substrate site; that span reads HLR. Lys100, His137, and His175 together coordinate Zn(2+). Position 100 is an N6-carboxylysine (Lys100). Position 137 (His137) interacts with substrate. A substrate-binding site is contributed by Leu220. Asp248 is a Zn(2+) binding site. The active site involves Asp248. His252 and Ala264 together coordinate substrate.

The protein belongs to the metallo-dependent hydrolases superfamily. DHOase family. Class II DHOase subfamily. Homodimer. Requires Zn(2+) as cofactor.

The catalysed reaction is (S)-dihydroorotate + H2O = N-carbamoyl-L-aspartate + H(+). It participates in pyrimidine metabolism; UMP biosynthesis via de novo pathway; (S)-dihydroorotate from bicarbonate: step 3/3. Catalyzes the reversible cyclization of carbamoyl aspartate to dihydroorotate. The chain is Dihydroorotase from Pseudomonas paraeruginosa (strain DSM 24068 / PA7) (Pseudomonas aeruginosa (strain PA7)).